Reading from the N-terminus, the 603-residue chain is Geraniol synthase Tps-5073G30, chloroplastic (603 aa).

Residues Met-1 to Ser-35 constitute a chloroplast transit peptide. Residues Arg-319, Asp-356, Asp-360, Arg-497, and Asp-500 each contribute to the (2E)-geranyl diphosphate site. Residues Asp-356 and Asp-360 each coordinate Mg(2+). The short motif at Asp-356 to Asp-360 is the DDXXD motif element. Mg(2+) contacts are provided by Asp-500, Thr-504, and Glu-508.

It belongs to the terpene synthase family. Tpsb subfamily. As to quaternary structure, monomer. Mg(2+) is required as a cofactor. The cofactor is Mn(2+).

The protein localises to the plastid. The protein resides in the chloroplast. It catalyses the reaction (2E)-geranyl diphosphate + H2O = (2E)-geraniol + diphosphate. The protein operates within secondary metabolite biosynthesis; terpenoid biosynthesis. Monoterpene synthase (mono-TPS) involved in the biosynthesis of monoterpenes natural products. Catalyzes the conversion of (2E)-geranyl diphosphate (GPP) into geraniol. This chain is Geraniol synthase Tps-5073G30, chloroplastic, found in Perilla frutescens (Beefsteak mint).